A 299-amino-acid polypeptide reads, in one-letter code: HTH-type transcriptional regulator PgrR (299 aa).

In terms of domain architecture, HTH lysR-type spans 4 to 61 (EEIADLMAFVVVAEERSFTRAAARLSMAQSALSQIVRRIEERLGLRLLTRTTRSVVPT). The segment at residues 21 to 40 (FTRAAARLSMAQSALSQIVR) is a DNA-binding region (H-T-H motif).

This sequence belongs to the LysR transcriptional regulatory family.

Its function is as follows. Regulates the expression of genes involved in peptidoglycan (PG) degradation. Could play a role in switch control between recycling and degradation of PG peptides. Negatively regulates the expression of the ycjY-ymjD-ymjC-mpaA operon by binding to the PgrR-box. In addition, other genes are predicted to be under the control of PgrR, including genes related to membrane formation and function. The protein is HTH-type transcriptional regulator PgrR (pgrR) of Escherichia coli (strain K12).